The primary structure comprises 216 residues: Guanylate kinase (216 aa).

The Guanylate kinase-like domain maps to 15 to 193 (GNLFMVVAPS…ALKQLQNVVH (179 aa)). Residue 22-29 (APSGAGKS) coordinates ATP.

This sequence belongs to the guanylate kinase family.

Its subcellular location is the cytoplasm. The enzyme catalyses GMP + ATP = GDP + ADP. Its function is as follows. Essential for recycling GMP and indirectly, cGMP. This chain is Guanylate kinase, found in Cupriavidus metallidurans (strain ATCC 43123 / DSM 2839 / NBRC 102507 / CH34) (Ralstonia metallidurans).